Here is a 188-residue protein sequence, read N- to C-terminus: dCTP deaminase (188 aa).

DCTP is bound by residues 111-116, 135-137, glutamine 156, tyrosine 170, and glutamine 180; these read KSTYAR and TLE. Glutamate 137 functions as the Proton donor/acceptor in the catalytic mechanism.

It belongs to the dCTP deaminase family. Homotrimer.

The catalysed reaction is dCTP + H2O + H(+) = dUTP + NH4(+). Its pathway is pyrimidine metabolism; dUMP biosynthesis; dUMP from dCTP (dUTP route): step 1/2. In terms of biological role, catalyzes the deamination of dCTP to dUTP. The chain is dCTP deaminase from Azoarcus sp. (strain BH72).